The chain runs to 1171 residues: DExH-box ATP-dependent RNA helicase DExH15 chloroplastic (1171 aa).

A chloroplast-targeting transit peptide spans 1-58 (MNTLPVVSLTASSSFKFFHFPSLHRSLSHSPNFSFTKSLILNPNHLSFKSTLNSLSPS). The span at 53 to 62 (NSLSPSQSQL) shows a compositional bias: polar residues. The tract at residues 53 to 111 (NSLSPSQSQLYEEEDDEEEEEEDEDDDDEAADEYDNISDEIRNSDDDDDDEETEFSVDL) is disordered. Composition is skewed to acidic residues over residues 63–90 (YEEE…DNIS) and 97–107 (DDDDDDEETEF). Positions 163-327 (IEAFLRGSSV…WIGEIHGKTE (165 aa)) constitute a Helicase ATP-binding domain. ATP is bound at residue 176 to 183 (APTSSGKT). Residues 275 to 278 (DEVH) carry the DEVH box motif. The region spanning 424 to 620 (QISDTLWHLQ…ASYGMVLNLV (197 aa)) is the Helicase C-terminal domain.

Belongs to the DExH box helicase family.

It localises to the plastid. The protein localises to the chloroplast. The protein resides in the cytoplasmic granule. It catalyses the reaction ATP + H2O = ADP + phosphate + H(+). RNA helicase involved in group II intron splicing. Essential protein required during embryogenesis. Involved in post-transcriptional gene silencing. Modulates the determination of cell fate. Necessary for normal plasmodesmata (PD) development and aperture regulation. The polypeptide is DExH-box ATP-dependent RNA helicase DExH15 chloroplastic (ISE2) (Arabidopsis thaliana (Mouse-ear cress)).